The following is a 569-amino-acid chain: Dicarboxylate transporter 1, chloroplastic (569 aa).

The transit peptide at 1-93 (MASMALSLTS…VPSPAPVSAP (93 aa)) directs the protein to the chloroplast. Low complexity predominate over residues 23 to 74 (SLKPLSKSQPSISLPSLRSNASKSPSLSHKHFLSPPSLLLPHKLKPISASSP). A disordered region spans residues 23–93 (SLKPLSKSQP…VPSPAPVSAP (71 aa)). Residues 75-90 (TNPPPPPAPVPSPAPV) are compositionally biased toward pro residues. 12 consecutive transmembrane segments (helical) span residues 106-126 (PLLA…PEGV), 134-154 (LAIF…LGAV), 172-192 (AAFS…FFFA), 241-261 (AGGI…SNVG), 268-288 (LGAW…SMFL), 317-337 (AAFV…YVVY), 367-387 (IMAV…KLGV), 388-408 (DAVT…VVTW), 423-443 (WFAA…ITWF), 450-470 (VVGG…LLYF), 490-510 (FLSV…VLSF), and 543-563 (YGFL…GLWW).

This sequence belongs to the SLC13A/DASS transporter (TC 2.A.47) family. DIT1 subfamily. Monomer. In terms of processing, the N-terminus is blocked. In terms of tissue distribution, expressed in leaves.

It is found in the plastid. It localises to the chloroplast inner membrane. Functionally, 2-oxoglutarate/malate translocator that transports carbon skeletons into chloroplasts for net glutamate synthesis. This translocator exchanges malate for internal succinate, fumarate and 2-oxoglutarate but not for aspartate and glutamate. Involved with DIT2 in primary ammonia assimilation and in the re-assimilation of ammonia generated by the photorespiratory pathway. Imports 2-oxoglutarate into plastids as precursor for ammonia assimilation. 2-oxoglutarate is converted to glutamate, the end product of ammonia assimilation, which is exported to the cytosol by DIT2. The polypeptide is Dicarboxylate transporter 1, chloroplastic (DIT1) (Spinacia oleracea (Spinach)).